We begin with the raw amino-acid sequence, 927 residues long: Lysine-specific demethylase JMJ28 (927 aa).

The WRC domain occupies 7 to 52 (VPDEFRCNRSDGKQWRCKRRALEGKKMCESHHSQQSLKRSKQKVAE). The short motif at 30 to 37 (GKKMCESH) is the Nuclear localization signal 1 element. The segment at 30–92 (GKKMCESHHS…RLGKSKRKRV (63 aa)) is disordered. The span at 80 to 91 (RSKRLGKSKRKR) shows a compositional bias: basic residues. The Nuclear localization signal 2 motif lies at 127–134 (EKRKRLPN). Zn(2+) is bound by residues C227, C230, C241, C244, C250, C253, C269, and C272. Residues 227–273 (CHWCGTRGFGDLISCLSCEREFFCIDCIEKRNKGSKEEVEKKCPVCR) form an RING-type; degenerate zinc finger. A compositionally biased stretch (basic and acidic residues) spans 330–339 (ENDAEKKEGN). Disordered regions lie at residues 330-359 (ENDA…QPCS) and 701-736 (RSKN…SQHC). Residues 601-881 (FPNHYAEILN…ESIKRVKELN (281 aa)) enclose the JmjC domain.

It belongs to the JARID1 histone demethylase family. In terms of assembly, interacts with the FBH transcription factors FBH1, FBH2, FBH3 and FBH4. It depends on Fe(2+) as a cofactor. Expressed in inflorescences, flowers, roots, siliques, leaves and stems, especially in the vasculature (mainly phloem), with highest levels in floral organs. Present at high levels in flowers, shoot apex and young seeds, but observed at low levels in dry seeds, root apex and anthers.

Its subcellular location is the nucleus. Its function is as follows. May function as histone H3 lysine demethylase and be involved in regulation of gene expression. Regulates flowering time by promoting CONSTANS (CO) and CONSTANS-LIKE genes (e.g. COL2 and COL5) expression via interaction with FBH transcription factors (FBH1, FBH2, FBH3 and FBH4) at their loci to remove H3K9me2 repressive histone marks. Also modulates the expression of several developmental genes such as MYB30, TFS1, AGL6 and RVE2. The protein is Lysine-specific demethylase JMJ28 of Arabidopsis thaliana (Mouse-ear cress).